A 268-amino-acid chain; its full sequence is Nickel import ATP-binding protein NikE (268 aa).

One can recognise an ABC transporter domain in the interval 4 to 252; sequence LNVSGLSHHY…SSDAGRVLQN (249 aa). 45-52 contributes to the ATP binding site; the sequence is GRSGCGKS.

Belongs to the ABC transporter superfamily. Nickel importer (TC 3.A.1.5.3) family. In terms of assembly, the complex is composed of two ATP-binding proteins (NikD and NikE), two transmembrane proteins (NikB and NikC) and a solute-binding protein (NikA).

It localises to the cell inner membrane. The catalysed reaction is Ni(2+)(out) + ATP + H2O = Ni(2+)(in) + ADP + phosphate + H(+). Functionally, part of the ABC transporter complex NikABCDE involved in nickel import. Responsible for energy coupling to the transport system. In Shigella boydii serotype 4 (strain Sb227), this protein is Nickel import ATP-binding protein NikE.